A 344-amino-acid chain; its full sequence is Methionine synthase (344 aa).

Positions 211, 213, 236, and 315 each coordinate Zn(2+).

It belongs to the archaeal MetE family. Zn(2+) serves as cofactor.

Its pathway is amino-acid biosynthesis; L-methionine biosynthesis via de novo pathway. In terms of biological role, catalyzes the transfer of a methyl group to L-homocysteine resulting in methionine formation. The physiological methyl donor is unknown. This is Methionine synthase from Thermoplasma volcanium (strain ATCC 51530 / DSM 4299 / JCM 9571 / NBRC 15438 / GSS1).